A 117-amino-acid chain; its full sequence is Glycine cleavage system H-like protein (117 aa).

Positions 21–103 constitute a Lipoyl-binding domain; sequence IVKLGLSSQM…ESEGWFVVLQ (83 aa). Lysine 62 carries the N6-lipoyllysine modification.

Belongs to the GcvH family. Requires (R)-lipoate as cofactor.

The protein is Glycine cleavage system H-like protein of Chlamydia trachomatis serovar L2 (strain ATCC VR-902B / DSM 19102 / 434/Bu).